The primary structure comprises 196 residues: Pyridoxal 5'-phosphate synthase subunit PdxT (196 aa).

46 to 48 (GES) provides a ligand contact to L-glutamine. The Nucleophile role is filled by Cys78. L-glutamine contacts are provided by residues Arg110 and 138–139 (IR). Residues His174 and Glu176 each act as charge relay system in the active site.

This sequence belongs to the glutaminase PdxT/SNO family. In terms of assembly, in the presence of PdxS, forms a dodecamer of heterodimers. Only shows activity in the heterodimer.

It catalyses the reaction aldehydo-D-ribose 5-phosphate + D-glyceraldehyde 3-phosphate + L-glutamine = pyridoxal 5'-phosphate + L-glutamate + phosphate + 3 H2O + H(+). The catalysed reaction is L-glutamine + H2O = L-glutamate + NH4(+). It functions in the pathway cofactor biosynthesis; pyridoxal 5'-phosphate biosynthesis. Its function is as follows. Catalyzes the hydrolysis of glutamine to glutamate and ammonia as part of the biosynthesis of pyridoxal 5'-phosphate. The resulting ammonia molecule is channeled to the active site of PdxS. This chain is Pyridoxal 5'-phosphate synthase subunit PdxT, found in Deinococcus radiodurans (strain ATCC 13939 / DSM 20539 / JCM 16871 / CCUG 27074 / LMG 4051 / NBRC 15346 / NCIMB 9279 / VKM B-1422 / R1).